A 166-amino-acid polypeptide reads, in one-letter code: Cyanate hydratase (166 aa).

Residues Arg106, Glu109, and Ser132 contribute to the active site.

Belongs to the cyanase family.

The catalysed reaction is cyanate + hydrogencarbonate + 3 H(+) = NH4(+) + 2 CO2. Its function is as follows. Catalyzes the reaction of cyanate with bicarbonate to produce ammonia and carbon dioxide. The sequence is that of Cyanate hydratase from Verticillium alfalfae (strain VaMs.102 / ATCC MYA-4576 / FGSC 10136) (Verticillium wilt of alfalfa).